A 229-amino-acid polypeptide reads, in one-letter code: 2-C-methyl-D-erythritol 4-phosphate cytidylyltransferase (229 aa).

It belongs to the IspD/TarI cytidylyltransferase family. IspD subfamily.

The catalysed reaction is 2-C-methyl-D-erythritol 4-phosphate + CTP + H(+) = 4-CDP-2-C-methyl-D-erythritol + diphosphate. Its pathway is isoprenoid biosynthesis; isopentenyl diphosphate biosynthesis via DXP pathway; isopentenyl diphosphate from 1-deoxy-D-xylulose 5-phosphate: step 2/6. In terms of biological role, catalyzes the formation of 4-diphosphocytidyl-2-C-methyl-D-erythritol from CTP and 2-C-methyl-D-erythritol 4-phosphate (MEP). The protein is 2-C-methyl-D-erythritol 4-phosphate cytidylyltransferase of Clostridium acetobutylicum (strain ATCC 824 / DSM 792 / JCM 1419 / IAM 19013 / LMG 5710 / NBRC 13948 / NRRL B-527 / VKM B-1787 / 2291 / W).